The sequence spans 151 residues: Large ribosomal subunit protein bL9 (151 aa).

This sequence belongs to the bacterial ribosomal protein bL9 family.

Binds to the 23S rRNA. The chain is Large ribosomal subunit protein bL9 from Bordetella avium (strain 197N).